A 334-amino-acid polypeptide reads, in one-letter code: Probable tRNA pseudouridine synthase B (334 aa).

The active-site Nucleophile is D82. Positions 250 to 325 (LPKIWIKDSA…IAVDVEKVFM (76 aa)) constitute a PUA domain.

It belongs to the pseudouridine synthase TruB family. Type 2 subfamily.

It catalyses the reaction uridine(55) in tRNA = pseudouridine(55) in tRNA. In terms of biological role, could be responsible for synthesis of pseudouridine from uracil-55 in the psi GC loop of transfer RNAs. This is Probable tRNA pseudouridine synthase B from Pyrococcus horikoshii (strain ATCC 700860 / DSM 12428 / JCM 9974 / NBRC 100139 / OT-3).